A 248-amino-acid polypeptide reads, in one-letter code: uncharacterized protein (248 aa).

This is an uncharacterized protein from Ostreid herpesvirus 1 (isolate France) (OsHV-1).